Consider the following 172-residue polypeptide: MSEFHQDLSEEKSKSQVKRELHALQELGERLAGLRPEQLDRLPLTDALRRALLDAPKHTAHIARKRHIQYIGKLMRDQDIDAILALFEQLDASSRQYNERFHALERWRDRLLDGGDEALEAFVGDYPDTDRQHLRGLIRQARHETAQNKPPAASRKIFKYIRDLDESRRGLR.

It belongs to the DarP family.

It localises to the cytoplasm. In terms of biological role, member of a network of 50S ribosomal subunit biogenesis factors which assembles along the 30S-50S interface, preventing incorrect 23S rRNA structures from forming. Promotes peptidyl transferase center (PTC) maturation. In Azotobacter vinelandii (strain DJ / ATCC BAA-1303), this protein is Dual-action ribosomal maturation protein DarP.